The chain runs to 359 residues: Probable dual-specificity RNA methyltransferase RlmN (359 aa).

The active-site Proton acceptor is Glu-91. The Radical SAM core domain maps to 97–335; the sequence is QHYGHSVCVT…CVVRQEHGTD (239 aa). A disulfide bond links Cys-104 and Cys-340. [4Fe-4S] cluster contacts are provided by Cys-111, Cys-115, and Cys-118. S-adenosyl-L-methionine is bound by residues 163–164, Ser-195, 218–220, and Asn-296; these read GE and SLH. Cys-340 acts as the S-methylcysteine intermediate in catalysis.

Belongs to the radical SAM superfamily. RlmN family. Requires [4Fe-4S] cluster as cofactor.

The protein resides in the cytoplasm. The catalysed reaction is adenosine(2503) in 23S rRNA + 2 reduced [2Fe-2S]-[ferredoxin] + 2 S-adenosyl-L-methionine = 2-methyladenosine(2503) in 23S rRNA + 5'-deoxyadenosine + L-methionine + 2 oxidized [2Fe-2S]-[ferredoxin] + S-adenosyl-L-homocysteine. It carries out the reaction adenosine(37) in tRNA + 2 reduced [2Fe-2S]-[ferredoxin] + 2 S-adenosyl-L-methionine = 2-methyladenosine(37) in tRNA + 5'-deoxyadenosine + L-methionine + 2 oxidized [2Fe-2S]-[ferredoxin] + S-adenosyl-L-homocysteine. In terms of biological role, specifically methylates position 2 of adenine 2503 in 23S rRNA and position 2 of adenine 37 in tRNAs. The polypeptide is Probable dual-specificity RNA methyltransferase RlmN (Streptococcus pyogenes serotype M12 (strain MGAS2096)).